The following is a 440-amino-acid chain: Thymidine phosphorylase (440 aa).

This sequence belongs to the thymidine/pyrimidine-nucleoside phosphorylase family. In terms of assembly, homodimer.

It carries out the reaction thymidine + phosphate = 2-deoxy-alpha-D-ribose 1-phosphate + thymine. It functions in the pathway pyrimidine metabolism; dTMP biosynthesis via salvage pathway; dTMP from thymine: step 1/2. The enzymes which catalyze the reversible phosphorolysis of pyrimidine nucleosides are involved in the degradation of these compounds and in their utilization as carbon and energy sources, or in the rescue of pyrimidine bases for nucleotide synthesis. The polypeptide is Thymidine phosphorylase (Yersinia pseudotuberculosis serotype O:1b (strain IP 31758)).